The primary structure comprises 66 residues: Large ribosomal subunit protein bL35 (66 aa).

This sequence belongs to the bacterial ribosomal protein bL35 family.

This is Large ribosomal subunit protein bL35 from Thermomicrobium roseum (strain ATCC 27502 / DSM 5159 / P-2).